The primary structure comprises 178 residues: Ribosome maturation factor RimM (178 aa).

Residues Glu-95–Ile-174 enclose the PRC barrel domain.

The protein belongs to the RimM family. Binds ribosomal protein uS19.

The protein resides in the cytoplasm. Its function is as follows. An accessory protein needed during the final step in the assembly of 30S ribosomal subunit, possibly for assembly of the head region. Essential for efficient processing of 16S rRNA. May be needed both before and after RbfA during the maturation of 16S rRNA. It has affinity for free ribosomal 30S subunits but not for 70S ribosomes. The sequence is that of Ribosome maturation factor RimM from Sulfurovum sp. (strain NBC37-1).